The following is a 134-amino-acid chain: uncharacterized protein (134 aa).

The N-terminal stretch at 1-26 is a signal peptide; that stretch reads MRLYKAMALCLPLVVICTSEVSQSTA. Residues 77–98 are disordered; that stretch reads GEKNEEVAGPVDGEGSEEEAFD.

This is an uncharacterized protein from Encephalitozoon cuniculi (strain GB-M1) (Microsporidian parasite).